A 62-amino-acid polypeptide reads, in one-letter code: Temporin-HN1 (62 aa).

The N-terminal stretch at 1 to 22 is a signal peptide; the sequence is MFTLKKSLLLLLFLGTINLSLS. Residues 23-44 constitute a propeptide that is removed on maturation; it reads EQERNAEEERRDDPEEMDAEVE. At Leu60 the chain carries Leucine amide.

Expressed by the skin glands.

It is found in the secreted. Its function is as follows. Has antimicrobial activity against some Gram-positive bacteria and fungi but has no activity against a range of Gram-negative bacteria except P.faecalis. Active against the Gram-positive bacteria S.aureus ATCC 25923 (MIC=37.5 uM), S.carnosus KHS (MIC=37.5 uM), B.licheniformis X39 (MIC=19 uM), R.rhodochrous X15 (MIC=4.8 uM), is virtually inactive against E.faecalis 981 (MIC=150 uM) and inactive against E.faecium 091299. Has some antimicrobial activity against the Gram-negative bacterium P.faecalis X29 (MIC=75 uM) and is inactive against E.coli, P.aeruginosa and S.typhi. Has antifungal activity against C.albicans ATCC 2002 (MIC=19 uM) and lower activity against the slime mold 090223 (MIC=75 uM). Has low hemolytic activity against human erythrocytes (LC(50)=75 uM). This Odorrana hainanensis (Odor frog) protein is Temporin-HN1.